A 382-amino-acid chain; its full sequence is 3-dehydroquinate synthase (382 aa).

Residues 81 to 86 (EGEGSK), 115 to 119 (GVVGD), 139 to 140 (TS), lysine 152, and lysine 161 contribute to the NAD(+) site. Zn(2+) contacts are provided by glutamate 194, histidine 256, and histidine 274.

Belongs to the sugar phosphate cyclases superfamily. Dehydroquinate synthase family. Co(2+) is required as a cofactor. It depends on Zn(2+) as a cofactor. NAD(+) serves as cofactor.

The protein localises to the cytoplasm. The enzyme catalyses 7-phospho-2-dehydro-3-deoxy-D-arabino-heptonate = 3-dehydroquinate + phosphate. It functions in the pathway metabolic intermediate biosynthesis; chorismate biosynthesis; chorismate from D-erythrose 4-phosphate and phosphoenolpyruvate: step 2/7. Catalyzes the conversion of 3-deoxy-D-arabino-heptulosonate 7-phosphate (DAHP) to dehydroquinate (DHQ). This is 3-dehydroquinate synthase from Bradyrhizobium sp. (strain BTAi1 / ATCC BAA-1182).